Here is an 87-residue protein sequence, read N- to C-terminus: LYR motif-containing protein 2 (87 aa).

A mitochondrion-targeting transit peptide spans 1–19; sequence MGSRLPPAALTLKQFLVRQ.

Belongs to the complex I LYR family.

Its subcellular location is the mitochondrion. Involved in efficient integration of the N-module into mitochondrial respiratory chain complex I. This Xenopus tropicalis (Western clawed frog) protein is LYR motif-containing protein 2 (lyrm2).